A 138-amino-acid chain; its full sequence is Cysteine desulfuration protein SufE (138 aa).

The active-site Cysteine persulfide intermediate is the C51.

The protein belongs to the SufE family. As to quaternary structure, homodimer. Interacts with SufS.

Its subcellular location is the cytoplasm. Its pathway is cofactor biosynthesis; iron-sulfur cluster biosynthesis. In terms of biological role, participates in cysteine desulfuration mediated by SufS. Cysteine desulfuration mobilizes sulfur from L-cysteine to yield L-alanine and constitutes an essential step in sulfur metabolism for biosynthesis of a variety of sulfur-containing biomolecules. Functions as a sulfur acceptor for SufS, by mediating the direct transfer of the sulfur atom from the S-sulfanylcysteine of SufS, an intermediate product of cysteine desulfuration process. This chain is Cysteine desulfuration protein SufE, found in Klebsiella pneumoniae (strain 342).